The following is a 146-amino-acid chain: Hemoglobin subunit beta (146 aa).

An N-acetylvaline modification is found at Val1. The 145-residue stretch at 2-146 folds into the Globin domain; sequence HLTAEEKSAV…VANALAHKYH (145 aa). Thr12 carries the phosphothreonine modification. Residue Lys59 is modified to N6-acetyllysine. Residue His63 participates in heme b binding. Lys82 bears the N6-acetyllysine mark. His92 serves as a coordination point for heme b. Cys93 is subject to S-nitrosocysteine. At Lys144 the chain carries N6-acetyllysine.

The protein belongs to the globin family. As to quaternary structure, heterotetramer of two alpha chains and two beta chains. Red blood cells.

In terms of biological role, involved in oxygen transport from the lung to the various peripheral tissues. This Balaenoptera acutorostrata (Common minke whale) protein is Hemoglobin subunit beta (HBB).